Reading from the N-terminus, the 382-residue chain is Mannitol-1-phosphate 5-dehydrogenase (382 aa).

Residue 3–14 participates in NAD(+) binding; sequence ALHFGAGNIGRG. N6-acetyllysine is present on Lys-269.

Belongs to the mannitol dehydrogenase family.

The catalysed reaction is D-mannitol 1-phosphate + NAD(+) = beta-D-fructose 6-phosphate + NADH + H(+). The polypeptide is Mannitol-1-phosphate 5-dehydrogenase (Escherichia coli (strain ATCC 8739 / DSM 1576 / NBRC 3972 / NCIMB 8545 / WDCM 00012 / Crooks)).